We begin with the raw amino-acid sequence, 264 residues long: Undecaprenyl-diphosphatase 2 (264 aa).

The next 7 membrane-spanning stretches (helical) occupy residues Gly29 to Trp49, Ser77 to Leu97, Leu107 to Phe127, Ala137 to Val157, Phe180 to Leu200, Val212 to Met232, and Phe243 to Leu263.

The protein belongs to the UppP family.

The protein resides in the cell inner membrane. The catalysed reaction is di-trans,octa-cis-undecaprenyl diphosphate + H2O = di-trans,octa-cis-undecaprenyl phosphate + phosphate + H(+). Catalyzes the dephosphorylation of undecaprenyl diphosphate (UPP). Confers resistance to bacitracin. The polypeptide is Undecaprenyl-diphosphatase 2 (Mesorhizobium japonicum (strain LMG 29417 / CECT 9101 / MAFF 303099) (Mesorhizobium loti (strain MAFF 303099))).